The sequence spans 269 residues: Protein tio (269 aa).

Basic and acidic residues predominate over residues 1-12 (MANEPQEHEEGK). Positions 1-127 (MANEPQEHEE…NETKCPDEQN (127 aa)) are disordered. The Cytoplasmic segment spans residues 1-246 (MANEPQEHEE…VEKKLTCVIC (246 aa)). Positions 27–41 (PNIPQDPTPGTPPGP) are enriched in pro residues. The segment covering 61 to 74 (SEGPPDGSGNSSPP) has biased composition (low complexity). Polar residues-rich tracts occupy residues 91-101 (SESGGNNSAPN) and 114-127 (AGNG…DEQN). A Phosphotyrosine; by host LCK modification is found at Y136. Positions 158–167 (EEERSPFNKY) are CSKH/LBD2. Residues 186-195 (IPPPQLPPRP) form an SH3B/LBD1 region. The helical transmembrane segment at 247-267 (LLIGILVLLILLFMLGFLFLL) threads the bilayer. At 268 to 269 (MK) the chain is on the extracellular side.

Homodimer. Binds SH3 domain of host LYN, HCK, LCK, SRC, FYN or YES. When tyrosine-phosphorylated, binds to the SH2 domain of host LCK, SRC, or FYN. In terms of processing, phosphorylated by host LCK, SRC and less efficiently by FYN.

It localises to the host cell membrane. Its function is as follows. Transforms host T-cells, inducing T-cell lymphomia in the host. Activates at least SRC and LCK tyrosines kinases, thereby activating signaling pathway transforming host T-cells. Human T-cells transformed ex vivo display a IL2 indenpendent growth phenotype. This is Protein tio from Ateles (AtHV-3).